A 59-amino-acid polypeptide reads, in one-letter code: UPF0434 protein COSY_0767 (59 aa).

This sequence belongs to the UPF0434 family.

The protein is UPF0434 protein COSY_0767 of Vesicomyosocius okutanii subsp. Calyptogena okutanii (strain HA).